The chain runs to 157 residues: uncharacterized protein (157 aa).

In terms of domain architecture, N-acetyltransferase spans 9–154; sequence LLINYKTLDE…ETNLNAVTNE (146 aa).

This is an uncharacterized protein from Bacillus cereus (strain ATCC 14579 / DSM 31 / CCUG 7414 / JCM 2152 / NBRC 15305 / NCIMB 9373 / NCTC 2599 / NRRL B-3711).